A 237-amino-acid polypeptide reads, in one-letter code: Proteasome subunit alpha type-5-A (237 aa).

Residue Met-1 is modified to N-acetylmethionine. Glycyl lysine isopeptide (Lys-Gly) (interchain with G-Cter in ubiquitin) cross-links involve residues Lys-43 and Lys-66.

Belongs to the peptidase T1A family. Component of the 20S core complex of the 26S proteasome. The 26S proteasome is composed of a core protease (CP), known as the 20S proteasome, capped at one or both ends by the 19S regulatory particle (RP/PA700). The 20S proteasome core is composed of 28 subunits that are arranged in four stacked rings, resulting in a barrel-shaped structure. The two end rings are each formed by seven alpha subunits, and the two central rings are each formed by seven beta subunits. The catalytic chamber with the active sites is on the inside of the barrel.

The protein localises to the cytoplasm. Its subcellular location is the nucleus. The proteasome is a multicatalytic proteinase complex which is characterized by its ability to cleave peptides with Arg, Phe, Tyr, Leu, and Glu adjacent to the leaving group at neutral or slightly basic pH. The proteasome has an ATP-dependent proteolytic activity. The protein is Proteasome subunit alpha type-5-A (PAE1) of Arabidopsis thaliana (Mouse-ear cress).